A 247-amino-acid polypeptide reads, in one-letter code: Homeobox protein BarH-like 1b (247 aa).

Disordered stretches follow at residues 118–138 and 197–247; these read RGKLEPGGPETGSKAKKGRRS and GGGL…SQEE. A DNA-binding region (homeobox) is located at residues 135–194; it reads GRRSRTVFTELQLMGLEKRFEKQKYLSTPDRIDLAESLGLSQLQVKTWYQNRRMKWKKIV. Basic and acidic residues predominate over residues 223–234; sequence EQERARDAEKPP.

This sequence belongs to the BAR homeobox family. In terms of assembly, interacts with serum response factor (SRF). Expressed in smooth muscle cells of the upper digestive organs and their attached arteries and to craniofacial structures.

Its subcellular location is the nucleus. Its function is as follows. Transcription factor which is involved with the serum response factor (SRF) in the smooth muscle cell-specific transcription of the beta-tropomyosin gene in the upper digestive organs and their attached arteries. In Gallus gallus (Chicken), this protein is Homeobox protein BarH-like 1b (BARX1B).